Reading from the N-terminus, the 426-residue chain is Serine--tRNA ligase (426 aa).

233–235 (TAE) lines the L-serine pocket. Residue 264–266 (RRE) coordinates ATP. L-serine is bound at residue Glu-287. Position 351–354 (351–354 (EISS)) interacts with ATP. Ser-386 is an L-serine binding site.

It belongs to the class-II aminoacyl-tRNA synthetase family. Type-1 seryl-tRNA synthetase subfamily. In terms of assembly, homodimer. The tRNA molecule binds across the dimer.

The protein localises to the cytoplasm. It catalyses the reaction tRNA(Ser) + L-serine + ATP = L-seryl-tRNA(Ser) + AMP + diphosphate + H(+). The enzyme catalyses tRNA(Sec) + L-serine + ATP = L-seryl-tRNA(Sec) + AMP + diphosphate + H(+). It functions in the pathway aminoacyl-tRNA biosynthesis; selenocysteinyl-tRNA(Sec) biosynthesis; L-seryl-tRNA(Sec) from L-serine and tRNA(Sec): step 1/1. Functionally, catalyzes the attachment of serine to tRNA(Ser). Is also able to aminoacylate tRNA(Sec) with serine, to form the misacylated tRNA L-seryl-tRNA(Sec), which will be further converted into selenocysteinyl-tRNA(Sec). The polypeptide is Serine--tRNA ligase (Thermosipho africanus (strain TCF52B)).